Here is a 264-residue protein sequence, read N- to C-terminus: Apolipoprotein A-I (264 aa).

A signal peptide spans 1–18 (MRVVVVTLALLFLTGTQA). 2 consecutive repeat copies span residues 67–88 (LKLA…EDMA) and 89–110 (PYYK…AELT). Residues 67–264 (LKLADNLDTL…LLDELQKTVA (198 aa)) are 10 X approximate tandem repeats. Residues 111 to 121 (KDLEEVKEKIR) form a 3; half-length repeat. A run of 5 repeats spans residues 122–143 (PFLD…QRLA), 144–165 (PVAE…QKLT), 166–187 (PVAE…KNLA), 188–209 (PYSD…EKGI), and 210–231 (PQAA…EKMT). The 9; half-length repeat unit spans residues 232 to 242 (PLVQDFKERLT). Residues 243 to 264 (PYAENLKTRFISLLDELQKTVA) form repeat 10.

The protein belongs to the apolipoprotein A1/A4/E family. As to expression, major protein of plasma HDL, also found in chylomicrons.

It localises to the secreted. Functionally, participates in the reverse transport of cholesterol from tissues to the liver for excretion by promoting cholesterol efflux from tissues and by acting as a cofactor for the lecithin cholesterol acyltransferase (LCAT). This is Apolipoprotein A-I (APOA1) from Anas platyrhynchos (Mallard).